The sequence spans 803 residues: E3 ubiquitin-protein ligase UHRF2 (803 aa).

A Ubiquitin-like domain is found at 1-78 (MWIQVRTIDG…IQLLVRPDSS (78 aa)). 4 stretches are compositionally biased toward polar residues: residues 79 to 96 (LPSTSKQNDAQVKPSSHN), 106 to 115 (GGSSSQPSTS), 167 to 181 (KNGSSYKRTNGNVNH), and 189 to 200 (KLDNVPSTSNSD). Disordered regions lie at residues 79–115 (LPSTSKQNDAQVKPSSHNPPKVKKTARGGSSSQPSTS) and 154–200 (RASD…SNSD). The required for interaction with histone H3 stretch occupies residues 118-312 (TCLIDPGFGL…VDEIFKIEKP (195 aa)). Positions 195-289 (STSNSDSVAA…KEVRVKVFLG (95 aa)) are interaction with PCNP. A PHD-type zinc finger spans residues 340-396 (DKTCHMCSCHKCGEKRDPNMQLLCDECNMAYHIYCLSPPLDKVPEEEYWYCPSCKTD). Positions 415 to 645 (KMPSASTESR…LQYPAGYPSE (231 aa)) are methyl-CpG binding and interaction with HDAC1. The 165-residue stretch at 449–613 (GPIPGIPVGS…FLVWRYLLRR (165 aa)) folds into the YDG domain. Residues 643-676 (PSEKEGKKTKGQSKKQGSEATKRPASDDECPGDS) form a disordered region. Residues 658-668 (QGSEATKRPAS) show a composition bias toward basic and acidic residues. Ser-668 carries the post-translational modification Phosphoserine. An RING-type zinc finger spans residues 734-773 (CVCCQELVYQPVTTECFHNVCKDCLQRSFKAQVFSCPACR).

As to quaternary structure, homodimer; disulfide-linked. Binds methylated CpG containing oligonucleotides. Interacts with H3; the interaction has a preference for the 'Lys-9' trimethylated form of H3 (H3K9me3). Interacts with PCNP. Interacts with HDAC1. Interacts directly with CCNE1; the interaction ubiquitinates CCNE1 and appears independent of CCNE1 phosphorylation. Interacts with CCND1; the interaction ubiquitinates CCND1 and appears independent of CCND1 phosphorylation. Interacts with p53/TP53 and RB1. Interacts with UBE2I. Interacts with ZNF618. Interacts with UHRF1. Interacts with FANCD2. Interacts with ATR. Interacts with PCNA. In terms of processing, may be autoubiquitinated; which may lead to proteasomal degradation. Post-translationally, phosphorylated. Phosphorylation may be mediated by CDK2. Autosumoylated. Mostly detected in several tissues, including the thymus, spleen, lung, adrenal gland, and ovary. In addition, found in several tissues in the brain (cerebellum, hippocampus, and cerebral cortex).

Its subcellular location is the nucleus. The protein localises to the chromosome. It catalyses the reaction S-ubiquitinyl-[E2 ubiquitin-conjugating enzyme]-L-cysteine + [acceptor protein]-L-lysine = [E2 ubiquitin-conjugating enzyme]-L-cysteine + N(6)-ubiquitinyl-[acceptor protein]-L-lysine.. It participates in protein modification; protein ubiquitination. With respect to regulation, E3 ligase activity is robustly activated by 5-hydroxy-methylcytosine. Functionally, E3 ubiquitin ligase that plays important roles in DNA methylation, histone modifications, cell cycle and DNA repair. Acts as a specific reader for 5-hydroxymethylcytosine (5hmC) and thereby recruits various substrates to these sites to ubiquitinate them. This activity also allows the maintenance of 5mC levels at specific genomic loci and regulates neuron-related gene expression. Participates in cell cycle regulation by ubiquitinating cyclins CCND1 and CCNE1 and thus inducing G1 arrest. Also ubiquitinates PCNP leading to its degradation by the proteasome. Plays an active role in DNA damage repair by ubiquitinating p21/CDKN1A leading to its proteasomal degradation. Also promotes DNA repair by acting as an interstrand cross-links (ICLs) sensor. Mechanistically, cooperates with UHRF1 to ensure recruitment of FANCD2 to ICLs, leading to FANCD2 monoubiquitination and subsequent activation. Contributes to UV-induced DNA damage response by physically interacting with ATR in response to irradiation, thereby promoting ATR activation. In Mus musculus (Mouse), this protein is E3 ubiquitin-protein ligase UHRF2 (Uhrf2).